The sequence spans 344 residues: Phosphate acyltransferase (344 aa).

It belongs to the PlsX family. As to quaternary structure, homodimer. Probably interacts with PlsY.

It localises to the cytoplasm. The enzyme catalyses a fatty acyl-[ACP] + phosphate = an acyl phosphate + holo-[ACP]. Its pathway is lipid metabolism; phospholipid metabolism. Functionally, catalyzes the reversible formation of acyl-phosphate (acyl-PO(4)) from acyl-[acyl-carrier-protein] (acyl-ACP). This enzyme utilizes acyl-ACP as fatty acyl donor, but not acyl-CoA. The sequence is that of Phosphate acyltransferase from Thermosynechococcus vestitus (strain NIES-2133 / IAM M-273 / BP-1).